Consider the following 184-residue polypeptide: Endothelial cell-specific molecule 1 (184 aa).

A signal peptide spans 1 to 19 (MKSVLLLTTLLVPAHLVAA). Residues 24-102 (YAVDCPQHCD…GEEFGICKDC (79 aa)) form the IGFBP N-terminal domain. Disulfide bonds link cysteine 28–cysteine 51, cysteine 32–cysteine 53, cysteine 37–cysteine 54, cysteine 43–cysteine 57, cysteine 65–cysteine 83, and cysteine 77–cysteine 99. O-linked (Xyl...) (chondroitin sulfate) serine glycosylation occurs at serine 156.

As to quaternary structure, monomer. Post-translationally, may contain intrachain disulfide bonds. In terms of processing, O-glycosylated; contains chondroitin sulfate and dermatan sulfate. Expressed in lung, on the vascular capillary network within alveolar walls, and also at lower level in kidney.

It localises to the secreted. Its function is as follows. Involved in angiogenesis; promotes angiogenic sprouting. May have potent implications in lung endothelial cell-leukocyte interactions. This Homo sapiens (Human) protein is Endothelial cell-specific molecule 1 (ESM1).